We begin with the raw amino-acid sequence, 56 residues long: Small ribosomal subunit protein uS14B (56 aa).

Positions 21 and 24 each coordinate Zn(2+). Serine 25 bears the Phosphoserine mark. Positions 39 and 42 each coordinate Zn(2+).

The protein belongs to the universal ribosomal protein uS14 family. Component of the small ribosomal subunit (SSU). Mature yeast ribosomes consist of a small (40S) and a large (60S) subunit. The 40S small subunit contains 1 molecule of ribosomal RNA (18S rRNA) and 33 different proteins (encoded by 57 genes). The large 60S subunit contains 3 rRNA molecules (25S, 5.8S and 5S rRNA) and 46 different proteins (encoded by 81 genes). Zn(2+) serves as cofactor.

The protein localises to the cytoplasm. In terms of biological role, component of the ribosome, a large ribonucleoprotein complex responsible for the synthesis of proteins in the cell. The small ribosomal subunit (SSU) binds messenger RNAs (mRNAs) and translates the encoded message by selecting cognate aminoacyl-transfer RNA (tRNA) molecules. The large subunit (LSU) contains the ribosomal catalytic site termed the peptidyl transferase center (PTC), which catalyzes the formation of peptide bonds, thereby polymerizing the amino acids delivered by tRNAs into a polypeptide chain. The nascent polypeptides leave the ribosome through a tunnel in the LSU and interact with protein factors that function in enzymatic processing, targeting, and the membrane insertion of nascent chains at the exit of the ribosomal tunnel. The sequence is that of Small ribosomal subunit protein uS14B from Saccharomyces cerevisiae (strain ATCC 204508 / S288c) (Baker's yeast).